We begin with the raw amino-acid sequence, 308 residues long: Glutaminase (308 aa).

7 residues coordinate substrate: Ser66, Asn117, Glu161, Asn168, Tyr192, Tyr244, and Val262.

Belongs to the glutaminase family. In terms of assembly, homotetramer.

The enzyme catalyses L-glutamine + H2O = L-glutamate + NH4(+). The chain is Glutaminase from Klebsiella pneumoniae (strain 342).